The primary structure comprises 182 residues: Large ribosomal subunit protein uL6 (182 aa).

This sequence belongs to the universal ribosomal protein uL6 family. As to quaternary structure, part of the 50S ribosomal subunit.

This protein binds to the 23S rRNA, and is important in its secondary structure. It is located near the subunit interface in the base of the L7/L12 stalk, and near the tRNA binding site of the peptidyltransferase center. The protein is Large ribosomal subunit protein uL6 of Trichormus variabilis (strain ATCC 29413 / PCC 7937) (Anabaena variabilis).